The primary structure comprises 24 residues: Hyaluronidase (24 aa).

As to expression, expressed by the venom gland.

The protein resides in the secreted. It carries out the reaction Random hydrolysis of (1-&gt;4)-linkages between N-acetyl-beta-D-glucosamine and D-glucuronate residues in hyaluronate.. Possesses high activity against hyaluronan in vitro. In Tityus stigmurus (Brazilian scorpion), this protein is Hyaluronidase.